A 266-amino-acid chain; its full sequence is 3',5'-cyclic-nucleotide phosphodiesterase alr5338 (266 aa).

Residues D14, H16, D56, N86, H155, H194, and H196 each coordinate Fe cation. AMP is bound by residues H16, D56, and 86 to 87 (NH). H196 lines the AMP pocket.

This sequence belongs to the cyclic nucleotide phosphodiesterase class-III family. It depends on Fe(2+) as a cofactor. Mn(2+) is required as a cofactor.

It carries out the reaction a nucleoside 3',5'-cyclic phosphate + H2O = a nucleoside 5'-phosphate + H(+). The enzyme catalyses 3',5'-cyclic AMP + H2O = AMP + H(+). The catalysed reaction is 3',5'-cyclic GMP + H2O = GMP + H(+). Activated by iron and manganese. Its function is as follows. Hydrolyzes cAMP to 5'-AMP. Plays an important regulatory role in modulating the intracellular concentration of cAMP, thereby influencing cAMP-dependent processes. Can also hydrolyze cGMP. The chain is 3',5'-cyclic-nucleotide phosphodiesterase alr5338 from Nostoc sp. (strain PCC 7120 / SAG 25.82 / UTEX 2576).